The following is a 101-amino-acid chain: Diptericin-D (101 aa).

A signal peptide spans 1–18 (MKLFYLLVICALSLAVMA). 2 O-linked (GalNAc...) threonine glycosylation sites follow: Thr-28 and Thr-72. Phenylalanine amide is present on Phe-100.

This sequence belongs to the attacin/sarcotoxin-2 family.

Functionally, has activity against E.coli. In Protophormia terraenovae (Northern blowfly), this protein is Diptericin-D.